The following is a 306-amino-acid chain: 5'-hydroxyaverantin dehydrogenase (306 aa).

5 residues coordinate NADP(+): Ser25, Ile27, Gln48, Lys52, and Asp73. The Proton donor role is filled by Ser173. 4 residues coordinate NADP(+): Tyr187, Lys191, Val220, and Thr222. Tyr187 functions as the Proton acceptor in the catalytic mechanism. Catalysis depends on Lys191, which acts as the Lowers pKa of active site Tyr.

It belongs to the short-chain dehydrogenases/reductases (SDR) family. Homodimer.

The protein localises to the cytoplasm. It localises to the cytosol. It catalyses the reaction (1'S,5'S)-5'-hydroxyaverantin + NAD(+) = (S)-5'-oxoaverantin + NADH + H(+). The catalysed reaction is (1'S,5'R)-5'-hydroxyaverantin + NAD(+) = (S)-5'-oxoaverantin + NADH + 2 H(+). Its pathway is mycotoxin biosynthesis. In terms of biological role, 5'-hydroxyaverantin dehydrogenase; part of the fragmented gene cluster that mediates the biosynthesis of dothistromin (DOTH), a polyketide toxin very similar in structure to the aflatoxin precursor, versicolorin B. The first step of the pathway is the conversion of acetate to norsolorinic acid (NOR) and requires the fatty acid synthase subunits hexA and hexB, as well as the polyketide synthase pksA. PksA combines a hexanoyl starter unit and 7 malonyl-CoA extender units to synthesize the precursor NOR. The hexanoyl starter unit is provided to the acyl-carrier protein (ACP) domain by the fungal fatty acid synthase hexA/hexB. The second step is the conversion of NOR to averantin (AVN) and requires the norsolorinic acid ketoreductase nor1, which catalyzes the dehydration of norsolorinic acid to form (1'S)-averantin. The cytochrome P450 monooxygenase avnA then catalyzes the hydroxylation of AVN to 5'hydroxyaverantin (HAVN). The next step is performed by adhA that transforms HAVN to averufin (AVF). Averufin might then be converted to hydroxyversicolorone by cypX and avfA. Hydroxyversicolorone is further converted versiconal hemiacetal acetate (VHA) by moxY. VHA is then the substrate for the versiconal hemiacetal acetate esterase est1 to yield versiconal (VAL). Versicolorin B synthase vbsA then converts VAL to versicolorin B (VERB) by closing the bisfuran ring. Then, the activity of the versicolorin B desaturase verB leads to versicolorin A (VERA). DotB, a predicted chloroperoxidase, may perform epoxidation of the A-ring of VERA. Alternatively, a cytochrome P450, such as cypX or avnA could catalyze this step. It is also possible that another, uncharacterized, cytochrome P450 enzyme is responsible for this step. Opening of the epoxide could potentially be achieved by the epoxide hydrolase epoA. However, epoA seems not to be required for DOTH biosynthesis, but other epoxide hydrolases may have the ability to complement this hydrolysis. Alternatively, opening of the epoxide ring could be achieved non-enzymatically. The next step is the deoxygenation of ring A to yield the 5,8-dihydroxyanthraquinone which is most likely catalyzed by the NADPH dehydrogenase encoded by ver1. The last stages of DOTH biosynthesis are proposed to involve hydroxylation of the bisfuran. OrdB and norB might have oxidative roles here. An alternative possibility is that cytochrome P450 monoogenases such as avnA and cypX might perform these steps in addition to previously proposed steps. This chain is 5'-hydroxyaverantin dehydrogenase, found in Dothistroma septosporum (strain NZE10 / CBS 128990) (Red band needle blight fungus).